We begin with the raw amino-acid sequence, 28 residues long: Expansin-B1 (28 aa).

Residues 11 to 28 (MLLSLQGPXSLRMVSESG) enclose the Expansin-like CBD domain.

Belongs to the expansin family. Expansin B subfamily.

Its subcellular location is the secreted. It localises to the cell wall. It is found in the membrane. Functionally, may cause loosening and extension of plant cell walls by disrupting non-covalent bonding between cellulose microfibrils and matrix glucans. The sequence is that of Expansin-B1 from Pseudotsuga menziesii (Douglas-fir).